The chain runs to 367 residues: Tubulin-like protein CetZ (367 aa).

GTP-binding positions include 11–15 (QCGNR), serine 111, 115–117 (GTG), glutamate 148, asparagine 176, and asparagine 194.

It belongs to the CetZ family.

It localises to the cytoplasm. Involved in cell shape control. The protein is Tubulin-like protein CetZ of Methanothrix thermoacetophila (strain DSM 6194 / JCM 14653 / NBRC 101360 / PT) (Methanosaeta thermophila).